Consider the following 385-residue polypeptide: Chaperone protein DnaJ (385 aa).

A J domain is found at D5–G70. The CR-type zinc finger occupies G143 to D221. Positions 156, 159, 173, 176, 195, 198, 209, and 212 each coordinate Zn(2+). 4 CXXCXGXG motif repeats span residues C156–G163, C173–G180, C195–G202, and C209–G216.

This sequence belongs to the DnaJ family. As to quaternary structure, homodimer. It depends on Zn(2+) as a cofactor.

Its subcellular location is the cytoplasm. Participates actively in the response to hyperosmotic and heat shock by preventing the aggregation of stress-denatured proteins and by disaggregating proteins, also in an autonomous, DnaK-independent fashion. Unfolded proteins bind initially to DnaJ; upon interaction with the DnaJ-bound protein, DnaK hydrolyzes its bound ATP, resulting in the formation of a stable complex. GrpE releases ADP from DnaK; ATP binding to DnaK triggers the release of the substrate protein, thus completing the reaction cycle. Several rounds of ATP-dependent interactions between DnaJ, DnaK and GrpE are required for fully efficient folding. Also involved, together with DnaK and GrpE, in the DNA replication of plasmids through activation of initiation proteins. This Ruegeria sp. (strain TM1040) (Silicibacter sp.) protein is Chaperone protein DnaJ.